A 26-amino-acid polypeptide reads, in one-letter code: Acyl carrier protein (26 aa).

In terms of domain architecture, Carrier spans 2-26 (SDTATRVQKIVVEHLGVESDKVTQE).

The protein belongs to the acyl carrier protein (ACP) family. In terms of processing, 4'-phosphopantetheine is transferred from CoA to a specific serine of apo-ACP by AcpS. This modification is essential for activity because fatty acids are bound in thioester linkage to the sulfhydryl of the prosthetic group.

The protein resides in the cytoplasm. It participates in lipid metabolism; fatty acid biosynthesis. Functionally, carrier of the growing fatty acid chain in fatty acid biosynthesis. This is Acyl carrier protein (acpP) from Erythrobacter longus.